We begin with the raw amino-acid sequence, 849 residues long: Mechanosensitive ion channel protein 7 (849 aa).

Positions 1 to 49 are disordered; that stretch reads MEFRKPFKSHSSYKQIISTGDQNEKTKKKKKLANLDDGDIAKTQSSGSS. Residues 9–21 show a composition bias toward polar residues; sequence SHSSYKQIISTGD. 6 helical membrane-spanning segments follow: residues 231–251, 274–294, 313–333, 344–364, 606–626, and 642–662; these read AITL…VLSL, LVLI…VFFI, TAVQ…FLFD, VLLL…LWLI, MISF…LEIA, and AFMF…LFII.

It belongs to the MscS (TC 1.A.23) family.

It localises to the membrane. Its function is as follows. Mechanosensitive channel that opens in response to stretch forces in the membrane lipid bilayer. In Arabidopsis thaliana (Mouse-ear cress), this protein is Mechanosensitive ion channel protein 7 (MSL7).